Consider the following 584-residue polypeptide: uncharacterized protein (584 aa).

Residues 1 to 27 (MGLSRKKIFTWPLLLTGMAVVSTTFSS) form the signal peptide. C28 is lipidated: N-palmitoyl cysteine. C28 carries the S-diacylglycerol cysteine lipid modification. The segment at 530 to 570 (NLPKKEGSTNQANQQTNQTNRSTDATKKDSSSDETNKNPLA) is disordered. Positions 538–552 (TNQANQQTNQTNRST) are enriched in low complexity. Residues 553 to 565 (DATKKDSSSDETN) show a composition bias toward basic and acidic residues.

This sequence belongs to the MG067/MG068/MG395 family.

It localises to the cell membrane. This is an uncharacterized protein from Mycoplasmoides gallisepticum (strain R(low / passage 15 / clone 2)) (Mycoplasma gallisepticum).